Consider the following 151-residue polypeptide: CHSLRYDRLYSRRNTCLYLLLTWMLTALATVPNFLVGSLKYDPRVFSCTFTQTASSSYTVCVVLIHFLVPLGVVSFCYLRIWTLVIRVKGRVRPNPKVRAADLRNFLTMFVVFVLFAVCWAPLNFIGLAVAINPAKVAPNIPEWLFVTSYF.

The Cytoplasmic segment spans residues Cys-1–Arg-13. Residues Asn-14–Phe-34 form a helical membrane-spanning segment. Residues Leu-35 to Tyr-58 are Extracellular-facing. The chain crosses the membrane as a helical span at residues Thr-59 to Leu-79. The Cytoplasmic portion of the chain corresponds to Arg-80 to Met-109. A helical membrane pass occupies residues Phe-110–Val-130. The Extracellular segment spans residues Ala-131 to Glu-143. A helical transmembrane segment spans residues Trp-144 to Phe-151.

The protein belongs to the G-protein coupled receptor 1 family.

It is found in the cell membrane. In terms of biological role, high affinity receptor for melatonin. The activity of this receptor is mediated by pertussis toxin sensitive G proteins that inhibits adenylate cyclase activity. The sequence is that of Melatonin receptor type 1C (mtnr1c) from Danio rerio (Zebrafish).